A 632-amino-acid chain; its full sequence is Chaperone protein HtpG (632 aa).

Positions 1-339 (MAHETMSFQA…SADLPLNVSR (339 aa)) are a; substrate-binding. Residues 340–559 (EILQESRDVK…DNDMSGYLQR (220 aa)) are b. Residues 560 to 632 (MLKAAGQNAP…TNALLLSRAA (73 aa)) are c.

It belongs to the heat shock protein 90 family. In terms of assembly, homodimer.

Its subcellular location is the cytoplasm. Its function is as follows. Molecular chaperone. Has ATPase activity. The polypeptide is Chaperone protein HtpG (Burkholderia ambifaria (strain ATCC BAA-244 / DSM 16087 / CCUG 44356 / LMG 19182 / AMMD) (Burkholderia cepacia (strain AMMD))).